The following is a 308-amino-acid chain: Glutamyl-Q tRNA(Asp) synthetase (308 aa).

L-glutamate contacts are provided by residues 19–23 (RFAPS) and Glu55. Positions 22 to 32 (PSPSGELHFGS) match the 'HIGH' region motif. Zn(2+) contacts are provided by Cys111, Cys113, Tyr125, and Cys129. L-glutamate contacts are provided by Tyr182 and Arg200. The 'KMSKS' region motif lies at 238–242 (KLSKQ). Lys241 contributes to the ATP binding site.

Belongs to the class-I aminoacyl-tRNA synthetase family. GluQ subfamily. It depends on Zn(2+) as a cofactor.

Functionally, catalyzes the tRNA-independent activation of glutamate in presence of ATP and the subsequent transfer of glutamate onto a tRNA(Asp). Glutamate is transferred on the 2-amino-5-(4,5-dihydroxy-2-cyclopenten-1-yl) moiety of the queuosine in the wobble position of the QUC anticodon. The protein is Glutamyl-Q tRNA(Asp) synthetase of Escherichia coli O157:H7.